A 197-amino-acid chain; its full sequence is Probable chorismate pyruvate-lyase 2 (197 aa).

The segment covering methionine 1 to proline 14 has biased composition (basic and acidic residues). A disordered region spans residues methionine 1–lysine 23. Substrate is bound by residues arginine 73, leucine 111, and glutamate 173.

The protein belongs to the UbiC family.

It is found in the cytoplasm. It catalyses the reaction chorismate = 4-hydroxybenzoate + pyruvate. It participates in cofactor biosynthesis; ubiquinone biosynthesis. Removes the pyruvyl group from chorismate, with concomitant aromatization of the ring, to provide 4-hydroxybenzoate (4HB) for the ubiquinone pathway. The sequence is that of Probable chorismate pyruvate-lyase 2 from Burkholderia pseudomallei (strain 1710b).